The chain runs to 996 residues: Low-density lipoprotein receptor-related protein 8 (996 aa).

The signal sequence occupies residues 1–28 (MGRPELGALRPLALLLLLLLQLQHLSAA). At 29-858 (DPLPGGQGPV…GSQMGSTVTA (830 aa)) the chain is on the extracellular side. LDL-receptor class A domains follow at residues 40 to 76 (ECEEDQFRCRNERCIPLVWRCDEDNDCSDNSDEDDCP), 79 to 117 (TCADSDFTCDNGHCIPERWKCDGEEECPDGSDESKATCS), 120 to 158 (ECPAEKLSCGPTSHKCVPASWRCDGEKDCEGGADEAGCP), 160 to 196 (LCAPHEFQCSNRSCLASVFVCDGDDDCGDGSDERGCS), 199 to 238 (ACPPREFRCGGGGTCIPERWVCDRQFDCEDRSDEAAELCG), 250 to 287 (ACAPTAQFTCRSGECIHLGWRCDGDRDCKDKSDEADCS), 290 to 326 (PCRENEFQCGDGTCVLAIKRCNQERDCPDGSDEAGCL), and 330 to 369 (TCEGPRRFQCKSGECVDGGKVCDDQRDCRDWSDEPQKVCG). Disulfide bonds link Cys41/Cys53, Cys48/Cys66, Cys60/Cys75, Cys80/Cys92, Cys87/Cys105, Cys99/Cys116, Cys121/Cys135, Cys128/Cys148, Cys142/Cys157, Cys161/Cys173, Cys168/Cys186, Cys180/Cys195, Cys200/Cys213, Cys207/Cys226, Cys220/Cys237, Cys251/Cys264, Cys259/Cys277, Cys271/Cys286, Cys291/Cys303, Cys298/Cys316, Cys310/Cys325, Cys331/Cys344, Cys339/Cys357, Cys351/Cys368, Cys373/Cys384, Cys380/Cys393, Cys395/Cys407, Cys413/Cys423, Cys419/Cys432, and Cys434/Cys447. Positions 58, 61, 63, 65, 71, and 72 each coordinate Ca(2+). N-linked (GlcNAc...) asparagine glycosylation occurs at Asn170. The EGF-like 1 domain occupies 364 to 408 (PQKVCGLNECLHNNGGCSHICTDLKIGFECTCPAGFQLLDQKTCG). Residues 409–448 (DIDECQDPDACSQICVNYKGYFKCECHPGYEMDTLTKNCK) enclose the EGF-like 2; calcium-binding domain. 5 LDL-receptor class B repeats span residues 495–541 (NRIY…DWVH), 542–584 (KHIY…DPLR), 585–628 (GFMY…DLLS), 629–671 (QRLY…AVFE), and 672–714 (DKVF…FHEL). Asn551 is a glycosylation site (N-linked (GlcNAc...) asparagine). Residues 773-831 (STSTTTLASAMTRTVPATTRAPGTTIHDPTYQNHSTETPSQTAAAPHSVNVPRAPSTSP) form a clustered O-linked oligosaccharides region. Positions 778–851 (TLASAMTRTV…SQHYGNEGSQ (74 aa)) are disordered. Over residues 802–815 (TYQNHSTETPSQTA) the composition is skewed to polar residues. Asn805 carries N-linked (GlcNAc...) asparagine glycosylation. A compositionally biased stretch (low complexity) spans 824–839 (PRAPSTSPSTPSPATS). N-linked (GlcNAc...) asparagine glycosylation is present at Asn840. Polar residues predominate over residues 840–851 (NHSQHYGNEGSQ). The helical transmembrane segment at 859-881 (AVIGVIVPIVVIALLCMSGYLIW) threads the bilayer. The Cytoplasmic portion of the chain corresponds to 882–996 (RNWKRKNTKS…ALSLEDDGLP (115 aa)).

It belongs to the LDLR family. Homooligomer. Interacts with VLDLR. Reelin associates with two or more receptor molecules. Interacts with DAB1 and JNK-interacting proteins. Interacts with SNX17. Interacts with PCSK9. Interacts with MDK; this interaction is calcium dependent. Interacts with CLU. In terms of processing, O-glycosylated. Some alternatively spliced isoforms lack the O-linked sugar domain. Post-translationally, undergoes sequential, furin and gamma-secretase dependent, proteolytic processing, resulting in the extracellular release of the entire ligand-binding domain as a soluble polypeptide and in the intracellular domain (ICD) release into the cytoplasm. The gamma-secretase-dependent proteolytical processing occurs after the bulk of the extracellular domain has been shed, in a furin-dependent manner, in alternatively spliced isoforms carrying the furin cleavage site. Hypoglycosylation (mainly hypo-O-glycosylation) leads to increased extracellular cleavage, which in turn results in accelerating release of the intracellular domain (ICD) by the gamma-secretase. The resulting receptor fragment is able to inhibit Reelin signaling and in particular the Reelin-induced DAB1 phosphorylation. Tyrosine phosphorylated upon apoE binding. In terms of processing, ubiquitinated by MYLIP leading to degradation. As to expression, expressed in neurons throughout the brain, with strong expression in pyramidal neurons of the hippocampus, granule cells of the dentate gyrus, cortical neurons and Purkinje cells of the cerebellum. Also expressed in the epithelium of the choroid plexus and of the blood vessels (apical expression), as well as in the epididymis.

It localises to the cell membrane. Its subcellular location is the secreted. Its function is as follows. Cell surface receptor for Reelin (RELN) and apolipoprotein E (apoE)-containing ligands. LRP8 participates in transmitting the extracellular Reelin signal to intracellular signaling processes, by binding to DAB1 on its cytoplasmic tail. Reelin acts via both the VLDL receptor (VLDLR) and LRP8 to regulate DAB1 tyrosine phosphorylation and microtubule function in neurons. LRP8 has higher affinity for Reelin than VLDLR. LRP8 is thus a key component of the Reelin pathway which governs neuronal layering of the forebrain during embryonic brain development. Binds the endoplasmic reticulum resident receptor-associated protein (RAP). Binds dimers of beta 2-glycoprotein I and may be involved in the suppression of platelet aggregation in the vasculature. Highly expressed in the initial segment of the epididymis, where it affects the functional expression of clusterin and phospholipid hydroperoxide glutathione peroxidase (PHGPx), two proteins required for sperm maturation. May also function as an endocytic receptor. Not required for endocytic uptake of SEPP1 in the kidney which is mediated by LRP2. Together with its ligand, apolipoprotein E (apoE), may indirectly play a role in the suppression of the innate immune response by controlling the survival of myeloid-derived suppressor cells. The polypeptide is Low-density lipoprotein receptor-related protein 8 (Lrp8) (Mus musculus (Mouse)).